A 512-amino-acid chain; its full sequence is Sucrose transport protein SUC5 (512 aa).

The disordered stretch occupies residues 1–27 (MGALEAERAANNATALETQSSPEDLGQ). Residues 1–33 (MGALEAERAANNATALETQSSPEDLGQPSPLRK) are Cytoplasmic-facing. Residues 11–22 (NNATALETQSSP) are compositionally biased toward polar residues. The residue at position 20 (serine 20) is a Phosphoserine. A helical transmembrane segment spans residues 34–54 (IISVASIAAGVQFGWALQLSL). Residues 55 to 67 (LTPYIQLLGIPHK) are Extracellular-facing. A helical transmembrane segment spans residues 68–88 (WSSYMWLCGPISGMIVQPIVG). Topologically, residues 89–102 (YHSDRCESRFGRRR) are cytoplasmic. Residues 103–123 (PFIAAGVALVAVSVFLIGFAA) traverse the membrane as a helical segment. The Extracellular portion of the chain corresponds to 124 to 140 (DMGHSFGDKLENKVRTR). The chain crosses the membrane as a helical span at residues 141 to 161 (AIIIFLTGFWFLDVANNTLQG). At 162–179 (PCRAFLADLAAGDAKKTR) the chain is on the cytoplasmic side. The chain crosses the membrane as a helical span at residues 180 to 200 (VANACFSFFMAVGNVLGYAAG). The Extracellular portion of the chain corresponds to 201–225 (SYTNLHKMFPFTMTKACDIYCANLK). The helical transmembrane segment at 226–246 (TCFFLSITLLLIVTFSSLWYV) threads the bilayer. Residues 247 to 281 (KDKQWSPPQGDKEEKTSSLFFFGEIFGAVRHMKRP) are Cytoplasmic-facing. The chain crosses the membrane as a helical span at residues 282–302 (MVMLLIVTVINWIAWFPFILY). Over 303-333 (DTDWMGREVYGGNSDGDERSKKLYDQGVQAG) the chain is Extracellular. The chain crosses the membrane as a helical span at residues 334–354 (ALGLMFNSILLGFVSLGVESI). Topologically, residues 355 to 363 (GRKMGGAKR) are cytoplasmic. The chain crosses the membrane as a helical span at residues 364-384 (LWGCVNFILAIGLAMTVLVTK). Residues 385–406 (SAEHHREIAGPLAGPSSGIKAG) lie on the Extracellular side of the membrane. The chain crosses the membrane as a helical span at residues 407-427 (VFSLFTVLGIPLAITYSIPFA). Residues 428–440 (LASIFSTNSGAGQ) are Cytoplasmic-facing. Residues 441–461 (GLSLGVLNIAICIPQMIVSFS) form a helical membrane-spanning segment. The Extracellular segment spans residues 462–473 (SGPLDAQFGGGN). A helical transmembrane segment spans residues 474 to 494 (LPSFVVGAIAAAVSGVLALTV). The Cytoplasmic segment spans residues 495 to 512 (LPSPPPDAPAMSGAMGFH).

Belongs to the glycoside-pentoside-hexuronide (GPH) cation symporter transporter (TC 2.A.2.4) family. As to expression, widely expressed. Expressed in the endosperm and on the epidermis of the outer surface of the cotyledons of torpedo-stage or older embryos.

The protein resides in the cell membrane. The catalysed reaction is sucrose(out) + H(+)(out) = sucrose(in) + H(+)(in). It functions in the pathway glycan biosynthesis; sucrose metabolism. Its activity is regulated as follows. Inhibited by protonophores (e.g. carbonyl cyanide m-chlorophenyl-hydrazone (CCCP)) and SH group inhibitors (e.g. p-chloromercuribenzene sulphonic acid (PCMBS)). Its function is as follows. Responsible in a heterologous system for the transport of sucrose into the cell, with the concomitant uptake of protons (symport system). Can also transport biotin, and probably maltose at a lesser rate. In planta, the role of SUC5 for the transport of sucrose seems to be negligible. Plays a role in the nutrition of the filial tissues during early seed development and is probably involved in the import of biotin into the endosperm and the embryo epidermis. In Arabidopsis thaliana (Mouse-ear cress), this protein is Sucrose transport protein SUC5.